The following is a 501-amino-acid chain: Cytochrome P450 71B3 (501 aa).

Residues 2-22 traverse the membrane as a helical segment; sequence SILLYFFFLPVILSLIFMKKF. Position 445 (cysteine 445) interacts with heme.

Belongs to the cytochrome P450 family. Heme serves as cofactor.

It is found in the membrane. This is Cytochrome P450 71B3 (CYP71B3) from Arabidopsis thaliana (Mouse-ear cress).